The primary structure comprises 471 residues: Regulator of microtubule dynamics protein 3 (471 aa).

Over 1–12 (MSRLGALGGSRA) the chain is Mitochondrial intermembrane. A helical transmembrane segment spans residues 13–35 (GLGLLLGTAAGLGFLCVLYSQRW). Residues 36 to 471 (KRTQRHGRSQ…LEELEVILGK (436 aa)) are Cytoplasmic-facing. Residues Ser44, Ser46, Ser50, and Ser57 each carry the phosphoserine modification. Residues 91–125 (LDRLDFVLTSLMALRREVEELQRSLQGLAGEIVGE) are a coiled coil. The FFAT signature appears at 157–163 (VYFTASS). A Phosphothreonine modification is found at Thr160. The segment at 168-203 (TDAESEGGYTTANAESDYERDSDKESEDAEDEVSCE) is disordered. Ser183, Ser193, Ser212, and Ser233 each carry phosphoserine. The span at 191 to 201 (KESEDAEDEVS) shows a compositional bias: acidic residues.

It belongs to the RMDN family. As to quaternary structure, interacts with PTPN2. Interacts with microtubules. Interacts with VAPB. Interacts (via FFAT motif) with MOSPD2 (via MSP domain). Interacts (via phosphorylated FFAT motif) with MOSPD2, VAPA and VAPB. Phosphorylation at Thr-160 of the FFAT motif activates interaction with MOSPD2, VAPA and VAPB.

The protein localises to the mitochondrion outer membrane. It is found in the cytoplasm. It localises to the nucleus. The protein resides in the cytoskeleton. Its subcellular location is the spindle. The protein localises to the spindle pole. Its function is as follows. Involved in cellular calcium homeostasis regulation. May participate in differentiation and apoptosis of keratinocytes. Overexpression induces apoptosis. The polypeptide is Regulator of microtubule dynamics protein 3 (Rattus norvegicus (Rat)).